We begin with the raw amino-acid sequence, 331 residues long: Ketol-acid reductoisomerase (NADP(+)) (331 aa).

Residues 2–182 (AKMYYDKDAD…GGTRAGVIET (181 aa)) enclose the KARI N-terminal Rossmann domain. Residues 25–28 (FGSQ), Ser-51, Ser-53, and 83–86 (DEKQ) each bind NADP(+). The active site involves His-108. Position 134 (Gly-134) interacts with NADP(+). The KARI C-terminal knotted domain occupies 183–328 (TFKEETETDL…KGLREMMAWI (146 aa)). Asp-191, Glu-195, Glu-227, and Glu-231 together coordinate Mg(2+). Ser-252 serves as a coordination point for substrate.

The protein belongs to the ketol-acid reductoisomerase family. The cofactor is Mg(2+).

It carries out the reaction (2R)-2,3-dihydroxy-3-methylbutanoate + NADP(+) = (2S)-2-acetolactate + NADPH + H(+). It catalyses the reaction (2R,3R)-2,3-dihydroxy-3-methylpentanoate + NADP(+) = (S)-2-ethyl-2-hydroxy-3-oxobutanoate + NADPH + H(+). Its pathway is amino-acid biosynthesis; L-isoleucine biosynthesis; L-isoleucine from 2-oxobutanoate: step 2/4. It functions in the pathway amino-acid biosynthesis; L-valine biosynthesis; L-valine from pyruvate: step 2/4. Involved in the biosynthesis of branched-chain amino acids (BCAA). Catalyzes an alkyl-migration followed by a ketol-acid reduction of (S)-2-acetolactate (S2AL) to yield (R)-2,3-dihydroxy-isovalerate. In the isomerase reaction, S2AL is rearranged via a Mg-dependent methyl migration to produce 3-hydroxy-3-methyl-2-ketobutyrate (HMKB). In the reductase reaction, this 2-ketoacid undergoes a metal-dependent reduction by NADPH to yield (R)-2,3-dihydroxy-isovalerate. This Thermoanaerobacter pseudethanolicus (strain ATCC 33223 / 39E) (Clostridium thermohydrosulfuricum) protein is Ketol-acid reductoisomerase (NADP(+)).